A 541-amino-acid polypeptide reads, in one-letter code: Long-chain-fatty-acid--CoA ligase (541 aa).

Thr184 is a Mg(2+) binding site. ATP is bound by residues Val231 and Trp234. The tetradecanoyl-AMP site is built by Gly302, Gln322, Gly323, and Thr327. ATP is bound by residues Gly323 and Thr327. Glu328 provides a ligand contact to Mg(2+). ATP is bound by residues Asp418, Lys435, Lys439, and Trp444. Asp418, Lys435, and Lys439 together coordinate tetradecanoyl-AMP.

Belongs to the ATP-dependent AMP-binding enzyme family. In terms of assembly, forms a domain swapped homodimer. Mg(2+) serves as cofactor.

It catalyses the reaction a long-chain fatty acid + ATP + CoA = a long-chain fatty acyl-CoA + AMP + diphosphate. The enzyme catalyses tetradecanoate + ATP + CoA = tetradecanoyl-CoA + AMP + diphosphate. It carries out the reaction hexadecanoate + ATP + CoA = hexadecanoyl-CoA + AMP + diphosphate. It functions in the pathway lipid metabolism; fatty acid metabolism. In terms of biological role, catalyzes the esterification of a number of long chain fatty acids with CoA, resulting in the formation of long-chain fatty acyl-CoA. Myristate (C14) is the most efficiently processed fatty acid, followed by palmitate (C16). Also catalyzes the esterification of stearate (C18) and laurate (C12), but at lower efficiency. Does not catalyze the esterification of the unsaturated fatty acids mysteroleic and palmitoleic acids in vitro. The protein is Long-chain-fatty-acid--CoA ligase of Thermus thermophilus (strain ATCC 27634 / DSM 579 / HB8).